The primary structure comprises 164 residues: Phosphopantetheine adenylyltransferase (164 aa).

Ser-10 provides a ligand contact to substrate. ATP-binding positions include 10-11 (SF) and His-18. The substrate site is built by Lys-42, Leu-74, and Arg-88. Residues 89–91 (GLR), Glu-99, and 124–130 (YAFLSSS) contribute to the ATP site.

The protein belongs to the bacterial CoaD family. In terms of assembly, homohexamer. The cofactor is Mg(2+).

It localises to the cytoplasm. The enzyme catalyses (R)-4'-phosphopantetheine + ATP + H(+) = 3'-dephospho-CoA + diphosphate. It functions in the pathway cofactor biosynthesis; coenzyme A biosynthesis; CoA from (R)-pantothenate: step 4/5. In terms of biological role, reversibly transfers an adenylyl group from ATP to 4'-phosphopantetheine, yielding dephospho-CoA (dPCoA) and pyrophosphate. The polypeptide is Phosphopantetheine adenylyltransferase (Geobacillus thermodenitrificans (strain NG80-2)).